A 318-amino-acid chain; its full sequence is Malate dehydrogenase (318 aa).

Residues 11 to 17 (GAGGNVG) and D37 each bind NAD(+). Positions 86 and 92 each coordinate substrate. NAD(+) contacts are provided by residues N99 and 122 to 124 (VTN). The substrate site is built by N124 and R155. The active-site Proton acceptor is the H179.

It belongs to the LDH/MDH superfamily. MDH type 3 family.

It catalyses the reaction (S)-malate + NAD(+) = oxaloacetate + NADH + H(+). Catalyzes the reversible oxidation of malate to oxaloacetate. The sequence is that of Malate dehydrogenase from Nitratiruptor sp. (strain SB155-2).